Here is a 398-residue protein sequence, read N- to C-terminus: 1-deoxy-D-xylulose 5-phosphate reductoisomerase (398 aa).

Residues T10, G11, S12, V13, G36, R37, N38, and N124 each coordinate NADPH. K125 contacts 1-deoxy-D-xylulose 5-phosphate. E126 contributes to the NADPH binding site. D150 provides a ligand contact to Mn(2+). The 1-deoxy-D-xylulose 5-phosphate site is built by S151, E152, S186, and H209. E152 is a binding site for Mn(2+). G215 contacts NADPH. 1-deoxy-D-xylulose 5-phosphate-binding residues include S222, N227, K228, and E231. Residue E231 participates in Mn(2+) binding.

It belongs to the DXR family. As to quaternary structure, homodimer. Requires Mg(2+) as cofactor. It depends on Mn(2+) as a cofactor.

It catalyses the reaction 2-C-methyl-D-erythritol 4-phosphate + NADP(+) = 1-deoxy-D-xylulose 5-phosphate + NADPH + H(+). It participates in isoprenoid biosynthesis; isopentenyl diphosphate biosynthesis via DXP pathway; isopentenyl diphosphate from 1-deoxy-D-xylulose 5-phosphate: step 1/6. Catalyzes the NADPH-dependent rearrangement and reduction of 1-deoxy-D-xylulose-5-phosphate (DXP) to 2-C-methyl-D-erythritol 4-phosphate (MEP). This Serratia proteamaculans (strain 568) protein is 1-deoxy-D-xylulose 5-phosphate reductoisomerase.